The primary structure comprises 323 residues: Transcription initiation factor IIB 7 (323 aa).

The span at M1–Q16 shows a compositional bias: basic and acidic residues. The interval M1–D35 is disordered. Residues E24–E56 form a TFIIB-type zinc finger. 4 residues coordinate Zn(2+): C29, C32, C48, and C51. Tandem repeats lie at residues S142 to L225 and K236 to E317.

It belongs to the TFIIB family.

In terms of biological role, stabilizes TBP binding to an archaeal box-A promoter. Also responsible for recruiting RNA polymerase II to the pre-initiation complex (DNA-TBP-TFIIB). The polypeptide is Transcription initiation factor IIB 7 (Halobacterium salinarum (strain ATCC 700922 / JCM 11081 / NRC-1) (Halobacterium halobium)).